A 397-amino-acid polypeptide reads, in one-letter code: Elongation factor Tu (397 aa).

A tr-type G domain is found at K10 to Q206. Positions G19–T26 are G1. G19 to T26 is a binding site for GTP. T26 provides a ligand contact to Mg(2+). The segment at G62–S66 is G2. Residues D83–G86 form a G3 region. GTP-binding positions include D83 to H87 and N138 to D141. The segment at N138–D141 is G4. The tract at residues S176–L178 is G5.

It belongs to the TRAFAC class translation factor GTPase superfamily. Classic translation factor GTPase family. EF-Tu/EF-1A subfamily. As to quaternary structure, monomer.

Its subcellular location is the cytoplasm. The enzyme catalyses GTP + H2O = GDP + phosphate + H(+). Its function is as follows. GTP hydrolase that promotes the GTP-dependent binding of aminoacyl-tRNA to the A-site of ribosomes during protein biosynthesis. This Thermobifida fusca (strain YX) protein is Elongation factor Tu.